A 127-amino-acid polypeptide reads, in one-letter code: Large ribosomal subunit protein bL12 (127 aa).

The protein belongs to the bacterial ribosomal protein bL12 family. As to quaternary structure, homodimer. Part of the ribosomal stalk of the 50S ribosomal subunit. Forms a multimeric L10(L12)X complex, where L10 forms an elongated spine to which 2 to 4 L12 dimers bind in a sequential fashion. Binds GTP-bound translation factors.

Functionally, forms part of the ribosomal stalk which helps the ribosome interact with GTP-bound translation factors. Is thus essential for accurate translation. This is Large ribosomal subunit protein bL12 from Chloroherpeton thalassium (strain ATCC 35110 / GB-78).